The primary structure comprises 150 residues: Snaclec 7 (150 aa).

A signal peptide spans 1–23 (MGRFISISFGLLVVFLSLSGTGA). Disulfide bonds link cysteine 27–cysteine 38, cysteine 55–cysteine 144, and cysteine 121–cysteine 136. Positions 34-145 (YEGYCYKVFN…CNDPRYFVCK (112 aa)) constitute a C-type lectin domain.

The protein belongs to the snaclec family. As to quaternary structure, heterodimer; disulfide-linked.

It is found in the secreted. Interferes with one step of hemostasis (modulation of platelet aggregation, or coagulation cascade, for example). The sequence is that of Snaclec 7 from Daboia siamensis (Eastern Russel's viper).